A 264-amino-acid chain; its full sequence is DNA-directed RNA polymerase subunit Rpo3 (264 aa).

Positions 203, 206, and 209 each coordinate [3Fe-4S] cluster.

It belongs to the archaeal Rpo3/eukaryotic RPB3 RNA polymerase subunit family. In terms of assembly, part of the RNA polymerase complex. The cofactor is [3Fe-4S] cluster.

It is found in the cytoplasm. The catalysed reaction is RNA(n) + a ribonucleoside 5'-triphosphate = RNA(n+1) + diphosphate. Its function is as follows. DNA-dependent RNA polymerase (RNAP) catalyzes the transcription of DNA into RNA using the four ribonucleoside triphosphates as substrates. The polypeptide is DNA-directed RNA polymerase subunit Rpo3 (Methanothermobacter thermautotrophicus (strain ATCC 29096 / DSM 1053 / JCM 10044 / NBRC 100330 / Delta H) (Methanobacterium thermoautotrophicum)).